The sequence spans 479 residues: Aspartyl/glutamyl-tRNA(Asn/Gln) amidotransferase subunit B (479 aa).

This sequence belongs to the GatB/GatE family. GatB subfamily. As to quaternary structure, heterotrimer of A, B and C subunits.

It catalyses the reaction L-glutamyl-tRNA(Gln) + L-glutamine + ATP + H2O = L-glutaminyl-tRNA(Gln) + L-glutamate + ADP + phosphate + H(+). It carries out the reaction L-aspartyl-tRNA(Asn) + L-glutamine + ATP + H2O = L-asparaginyl-tRNA(Asn) + L-glutamate + ADP + phosphate + 2 H(+). Allows the formation of correctly charged Asn-tRNA(Asn) or Gln-tRNA(Gln) through the transamidation of misacylated Asp-tRNA(Asn) or Glu-tRNA(Gln) in organisms which lack either or both of asparaginyl-tRNA or glutaminyl-tRNA synthetases. The reaction takes place in the presence of glutamine and ATP through an activated phospho-Asp-tRNA(Asn) or phospho-Glu-tRNA(Gln). This chain is Aspartyl/glutamyl-tRNA(Asn/Gln) amidotransferase subunit B, found in Geotalea uraniireducens (strain Rf4) (Geobacter uraniireducens).